The primary structure comprises 214 residues: YINYKNMLHQHMLTLFNLLPVGSNISTWWNFGSMLLICLMIQTTTGFFLAIHYTANINLAFSSIMHISRDVPYGWIMQNTHAIGASLFFICIYTHIARGIYYGSYLNKEVWLSGTTLLIILMATAFFGYVLPWGQMSFWAATVITNLLTAIPYLGNTLTTWLWGGFAINDPTLTRFFALHFILPFAIISLSSIHILLLHNEGSNNPLGTNSDID.

The next 4 helical transmembrane spans lie at 31–51 (FGSMLLICLMIQTTTGFFLAI), 75–96 (WIMQNTHAIGASLFFICIYTHI), 111–131 (WLSGTTLLIILMATAFFGYVL), and 176–196 (FFALHFILPFAIISLSSIHIL). Residues histidine 81 and histidine 95 each coordinate heme b. Positions 180 and 194 each coordinate heme b. Histidine 199 contributes to the a ubiquinone binding site.

It belongs to the cytochrome b family. As to quaternary structure, the cytochrome bc1 complex contains 3 respiratory subunits (MT-CYB, CYC1 and UQCRFS1), 2 core proteins (UQCRC1 and UQCRC2) and probably 6 low-molecular weight proteins. Heme b is required as a cofactor.

It is found in the mitochondrion inner membrane. Functionally, component of the ubiquinol-cytochrome c reductase complex (complex III or cytochrome b-c1 complex) that is part of the mitochondrial respiratory chain. The b-c1 complex mediates electron transfer from ubiquinol to cytochrome c. Contributes to the generation of a proton gradient across the mitochondrial membrane that is then used for ATP synthesis. This is Cytochrome b (MT-CYB) from Lachesis muta muta (Bushmaster).